A 480-amino-acid chain; its full sequence is tRNA (guanine(37)-N(1))-methyltransferase (480 aa).

A mitochondrion-targeting transit peptide spans 1-18 (MAAVWRRSARLFILLQRH). Residues His-273, 311-312 (DL), 339-340 (DG), and Asn-367 each bind S-adenosyl-L-methionine. The segment at 458-480 (HTQDRDTSEEPCPKKQKCEDSTN) is disordered.

It belongs to the class I-like SAM-binding methyltransferase superfamily. TRM5/TYW2 family. Monomer.

It localises to the mitochondrion matrix. It is found in the nucleus. Its subcellular location is the cytoplasm. The enzyme catalyses guanosine(37) in tRNA + S-adenosyl-L-methionine = N(1)-methylguanosine(37) in tRNA + S-adenosyl-L-homocysteine + H(+). Functionally, involved in mitochondrial tRNA methylation. Specifically methylates the N1 position of guanosine-37 in various tRNAs. Methylation is not dependent on the nature of the nucleoside 5' of the target nucleoside. This is the first step in the biosynthesis of wybutosine (yW), a modified base adjacent to the anticodon of tRNAs and required for accurate decoding. The protein is tRNA (guanine(37)-N(1))-methyltransferase (trmt5) of Danio rerio (Zebrafish).